Consider the following 308-residue polypeptide: Porphobilinogen deaminase (308 aa).

At cysteine 240 the chain carries S-(dipyrrolylmethanemethyl)cysteine.

It belongs to the HMBS family. As to quaternary structure, monomer. Dipyrromethane is required as a cofactor.

It catalyses the reaction 4 porphobilinogen + H2O = hydroxymethylbilane + 4 NH4(+). Its pathway is porphyrin-containing compound metabolism; protoporphyrin-IX biosynthesis; coproporphyrinogen-III from 5-aminolevulinate: step 2/4. Tetrapolymerization of the monopyrrole PBG into the hydroxymethylbilane pre-uroporphyrinogen in several discrete steps. The polypeptide is Porphobilinogen deaminase (Campylobacter lari (strain RM2100 / D67 / ATCC BAA-1060)).